The chain runs to 351 residues: Succinylglutamate desuccinylase (351 aa).

Residues His73, Glu76, and His168 each coordinate Zn(2+). The active site involves Glu231.

The protein belongs to the AspA/AstE family. Succinylglutamate desuccinylase subfamily. Zn(2+) serves as cofactor.

The catalysed reaction is N-succinyl-L-glutamate + H2O = L-glutamate + succinate. Its pathway is amino-acid degradation; L-arginine degradation via AST pathway; L-glutamate and succinate from L-arginine: step 5/5. Transforms N(2)-succinylglutamate into succinate and glutamate. This Burkholderia lata (strain ATCC 17760 / DSM 23089 / LMG 22485 / NCIMB 9086 / R18194 / 383) protein is Succinylglutamate desuccinylase.